A 308-amino-acid chain; its full sequence is Porphobilinogen deaminase (308 aa).

Position 241 is an S-(dipyrrolylmethanemethyl)cysteine (C241).

This sequence belongs to the HMBS family. As to quaternary structure, monomer. The cofactor is dipyrromethane.

The catalysed reaction is 4 porphobilinogen + H2O = hydroxymethylbilane + 4 NH4(+). Its pathway is porphyrin-containing compound metabolism; protoporphyrin-IX biosynthesis; coproporphyrinogen-III from 5-aminolevulinate: step 2/4. Its function is as follows. Tetrapolymerization of the monopyrrole PBG into the hydroxymethylbilane pre-uroporphyrinogen in several discrete steps. This is Porphobilinogen deaminase from Staphylococcus aureus (strain bovine RF122 / ET3-1).